We begin with the raw amino-acid sequence, 249 residues long: Chitooligosaccharide deacetylase (249 aa).

Positions 61 and 125 each coordinate Mg(2+).

It belongs to the YdjC deacetylase family. ChbG subfamily. Homodimer. Requires Mg(2+) as cofactor.

Its subcellular location is the cytoplasm. The catalysed reaction is N,N'-diacetylchitobiose + H2O = N-acetyl-beta-D-glucosaminyl-(1-&gt;4)-D-glucosamine + acetate. It carries out the reaction diacetylchitobiose-6'-phosphate + H2O = N'-monoacetylchitobiose-6'-phosphate + acetate. It participates in glycan degradation; chitin degradation. Involved in the degradation of chitin. ChbG is essential for growth on the acetylated chitooligosaccharides chitobiose and chitotriose but is dispensable for growth on cellobiose and chitosan dimer, the deacetylated form of chitobiose. Deacetylation of chitobiose-6-P and chitotriose-6-P is necessary for both the activation of the chb promoter by the regulatory protein ChbR and the hydrolysis of phosphorylated beta-glucosides by the phospho-beta-glucosidase ChbF. Catalyzes the removal of only one acetyl group from chitobiose-6-P to yield monoacetylchitobiose-6-P, the inducer of ChbR and the substrate of ChbF. In Escherichia coli O9:H4 (strain HS), this protein is Chitooligosaccharide deacetylase.